A 253-amino-acid chain; its full sequence is Imidazole glycerol phosphate synthase subunit HisF (253 aa).

Residues Asp-11 and Asp-130 contribute to the active site.

The protein belongs to the HisA/HisF family. As to quaternary structure, heterodimer of HisH and HisF.

It localises to the cytoplasm. It catalyses the reaction 5-[(5-phospho-1-deoxy-D-ribulos-1-ylimino)methylamino]-1-(5-phospho-beta-D-ribosyl)imidazole-4-carboxamide + L-glutamine = D-erythro-1-(imidazol-4-yl)glycerol 3-phosphate + 5-amino-1-(5-phospho-beta-D-ribosyl)imidazole-4-carboxamide + L-glutamate + H(+). Its pathway is amino-acid biosynthesis; L-histidine biosynthesis; L-histidine from 5-phospho-alpha-D-ribose 1-diphosphate: step 5/9. IGPS catalyzes the conversion of PRFAR and glutamine to IGP, AICAR and glutamate. The HisF subunit catalyzes the cyclization activity that produces IGP and AICAR from PRFAR using the ammonia provided by the HisH subunit. This Clostridium botulinum (strain Langeland / NCTC 10281 / Type F) protein is Imidazole glycerol phosphate synthase subunit HisF.